We begin with the raw amino-acid sequence, 216 residues long: MRDQFISLALMLCILHSACGLYFHISETERKCFIEEVPDETTVIVNYKVELYDPRSNGFMPSSPGIGMHVEVRDSDDKIVLSRVYSSQGRISFTSHTPGEHVICMYSNSTAWFSGAQLRVHLDIQVGEHAIDYANVAQKEKLTELQLRIRQLLDQVEQITKEQNYQRYREERFRHTSESTNSRVLWWSLAQTVVLVCMGFWQMRHLKSFFEAKKLV.

An N-terminal signal peptide occupies residues 1–20 (MRDQFISLALMLCILHSACG). At 21–182 (LYFHISETER…FRHTSESTNS (162 aa)) the chain is on the lumenal side. The 97-residue stretch at 30–126 (RKCFIEEVPD…QLRVHLDIQV (97 aa)) folds into the GOLD domain. Positions 134–164 (ANVAQKEKLTELQLRIRQLLDQVEQITKEQN) form a coiled coil. Residues 183–203 (RVLWWSLAQTVVLVCMGFWQM) traverse the membrane as a helical segment. At 204–216 (RHLKSFFEAKKLV) the chain is on the cytoplasmic side. The Prevents secretion from ER signature appears at 213–216 (KKLV).

It belongs to the EMP24/GP25L family.

The protein localises to the endoplasmic reticulum membrane. Functionally, eca and bai are essential, though not redundant, for dorsoventral patterning of the embryo. Specifically required during early embryogenesis for the activity of maternal tkv, while the zygotic tkv is not affected. Involved in Golgi organization. This chain is Transmembrane emp24 domain-containing protein eca, found in Drosophila erecta (Fruit fly).